Reading from the N-terminus, the 190-residue chain is Anthranilate synthase component II (190 aa).

Residues 1 to 190 enclose the Glutamine amidotransferase type-1 domain; that stretch reads MILIIDNYDS…ENFCTGIAKA (190 aa). 51–53 is a binding site for L-glutamine; that stretch reads GPG. C76 acts as the Nucleophile; for GATase activity in catalysis. Residues Q80 and 126–127 each bind L-glutamine; that span reads SL. Active-site residues include H167 and E169.

In terms of assembly, tetramer of two components I and two components II.

It carries out the reaction chorismate + L-glutamine = anthranilate + pyruvate + L-glutamate + H(+). Its pathway is amino-acid biosynthesis; L-tryptophan biosynthesis; L-tryptophan from chorismate: step 1/5. The sequence is that of Anthranilate synthase component II (trpG2) from Haloarcula marismortui (strain ATCC 43049 / DSM 3752 / JCM 8966 / VKM B-1809) (Halobacterium marismortui).